A 415-amino-acid polypeptide reads, in one-letter code: Phosphoglycerate kinase (415 aa).

Substrate contacts are provided by residues 27-29 (DVN), arginine 44, 67-70 (HQGR), arginine 124, and arginine 164. Residues glutamate 336 and 362-365 (GGHM) each bind ATP.

This sequence belongs to the phosphoglycerate kinase family. In terms of assembly, monomer.

It localises to the cytoplasm. It catalyses the reaction (2R)-3-phosphoglycerate + ATP = (2R)-3-phospho-glyceroyl phosphate + ADP. Its pathway is carbohydrate degradation; glycolysis; pyruvate from D-glyceraldehyde 3-phosphate: step 2/5. The chain is Phosphoglycerate kinase from Sulfolobus acidocaldarius (strain ATCC 33909 / DSM 639 / JCM 8929 / NBRC 15157 / NCIMB 11770).